Consider the following 768-residue polypeptide: Probable LRR receptor-like serine/threonine-protein kinase At4g37250 (768 aa).

Positions 1 to 21 (MRMELISVIFFFFCSVLSSSA) are cleaved as a signal peptide. Over 22–328 (LNSDGLVLMK…PNPRTGLRPG (307 aa)) the chain is Extracellular. N-linked (GlcNAc...) asparagine glycosylation occurs at asparagine 64. 8 LRR repeats span residues 67 to 90 (KVLT…GSLL), 91 to 112 (TLQS…SFFN), 115 to 137 (ELRF…IGDL), 139 to 162 (NLLT…ASLR), 163 to 183 (NLTV…GGWR), 184 to 206 (VVEF…FGGY), 207 to 229 (SLQY…IGVN), and 232 to 254 (RNVT…PVFL). Residue asparagine 99 is glycosylated (N-linked (GlcNAc...) asparagine). Asparagine 144, asparagine 163, asparagine 196, asparagine 212, asparagine 233, and asparagine 242 each carry an N-linked (GlcNAc...) asparagine glycan. The segment at 301–324 (PNTIGSNPVTDPNSQQTDPNPRTG) is disordered. The segment covering 303–320 (TIGSNPVTDPNSQQTDPN) has biased composition (polar residues). The chain crosses the membrane as a helical span at residues 329–349 (VIIGIVVGDIAGIGILAVIFL). At 350–768 (YIYRCKKNKI…IKSSSFHYGH (419 aa)) the chain is on the cytoplasmic side. Residues 361-432 (DNNNNDKQRT…NANQRSGDNK (72 aa)) form a disordered region. Low complexity predominate over residues 378-387 (STFSSSSSSP). Residues 407–420 (PSEEEDEDDEDEES) are compositionally biased toward acidic residues. The region spanning 449-756 (KASAYILGAT…AVLERFHPNS (308 aa)) is the Protein kinase domain. Residues serine 451 and serine 531 each carry the phosphoserine modification. A Phosphothreonine modification is found at threonine 553. The residue at position 662 (serine 662) is a Phosphoserine.

Belongs to the protein kinase superfamily. Ser/Thr protein kinase family.

The protein resides in the membrane. The enzyme catalyses L-seryl-[protein] + ATP = O-phospho-L-seryl-[protein] + ADP + H(+). It catalyses the reaction L-threonyl-[protein] + ATP = O-phospho-L-threonyl-[protein] + ADP + H(+). The chain is Probable LRR receptor-like serine/threonine-protein kinase At4g37250 from Arabidopsis thaliana (Mouse-ear cress).